Here is a 199-residue protein sequence, read N- to C-terminus: Probable GTP-binding protein EngB (199 aa).

An EngB-type G domain is found at 28-199 (DLPEIALAGR…ESWDTILEYL (172 aa)). Residues 36-43 (GRSNVGKS), 63-67 (GKTQL), 81-84 (DVPG), 148-151 (TKAD), and 180-182 (FSS) contribute to the GTP site. S43 and T65 together coordinate Mg(2+).

Belongs to the TRAFAC class TrmE-Era-EngA-EngB-Septin-like GTPase superfamily. EngB GTPase family. Mg(2+) is required as a cofactor.

In terms of biological role, necessary for normal cell division and for the maintenance of normal septation. The sequence is that of Probable GTP-binding protein EngB from Streptococcus equi subsp. zooepidemicus (strain H70).